The following is a 663-amino-acid chain: Tripartite terminase subunit 3 (663 aa).

Residues 205–212 (VPRRHGKT) carry the Walker A motif motif. The Walker B motif signature appears at 297–302 (LLIVDE). Catalysis depends on Glu-302, which acts as the For ATPase activity. Catalysis depends on for nuclease activity residues Asp-455, Glu-526, and Asp-640.

It belongs to the herpesviridae TRM3 protein family. As to quaternary structure, interacts with the terminase subunits TRM1 and TRM2. Interacts with portal protein.

Its subcellular location is the host nucleus. Its function is as follows. Component of the molecular motor that translocates viral genomic DNA in empty capsid during DNA packaging. Forms a tripartite terminase complex together with TRM1 and TRM2 in the host cytoplasm. Once the complex reaches the host nucleus, it interacts with the capsid portal vertex. This portal forms a ring in which genomic DNA is translocated into the capsid. TRM3 carries an RNase H-like nuclease activity that plays an important role for the cleavage of concatemeric viral DNA into unit length genomes. The protein is Tripartite terminase subunit 3 of Human herpesvirus 7 (strain JI) (HHV-7).